The sequence spans 204 residues: ATP synthase subunit b 2 (204 aa).

Residues 50–70 (IFWLAVTFGLLLFLMSKVALP) form a helical membrane-spanning segment.

This sequence belongs to the ATPase B chain family. F-type ATPases have 2 components, F(1) - the catalytic core - and F(0) - the membrane proton channel. F(1) has five subunits: alpha(3), beta(3), gamma(1), delta(1), epsilon(1). F(0) has three main subunits: a(1), b(2) and c(10-14). The alpha and beta chains form an alternating ring which encloses part of the gamma chain. F(1) is attached to F(0) by a central stalk formed by the gamma and epsilon chains, while a peripheral stalk is formed by the delta and b chains.

It localises to the cell inner membrane. Its function is as follows. F(1)F(0) ATP synthase produces ATP from ADP in the presence of a proton or sodium gradient. F-type ATPases consist of two structural domains, F(1) containing the extramembraneous catalytic core and F(0) containing the membrane proton channel, linked together by a central stalk and a peripheral stalk. During catalysis, ATP synthesis in the catalytic domain of F(1) is coupled via a rotary mechanism of the central stalk subunits to proton translocation. Component of the F(0) channel, it forms part of the peripheral stalk, linking F(1) to F(0). The b'-subunit is a diverged and duplicated form of b found in plants and photosynthetic bacteria. The protein is ATP synthase subunit b 2 (atpF2) of Rhodospirillum centenum (strain ATCC 51521 / SW).